The following is a 158-amino-acid chain: RNA pyrophosphohydrolase (158 aa).

In terms of domain architecture, Nudix hydrolase spans 9-151 (PLRNGVGIVV…KLHVYKDVKE (143 aa)). Positions 43 to 64 (GGVDKGEDYLTAAYRELEEETS) match the Nudix box motif.

This sequence belongs to the Nudix hydrolase family. RppH subfamily. The cofactor is a divalent metal cation.

Accelerates the degradation of transcripts by removing pyrophosphate from the 5'-end of triphosphorylated RNA, leading to a more labile monophosphorylated state that can stimulate subsequent ribonuclease cleavage. This Pelagibacter ubique (strain HTCC1062) protein is RNA pyrophosphohydrolase.